The sequence spans 239 residues: EF-hand domain-containing protein D1 (239 aa).

A compositionally biased stretch (basic and acidic residues) spans 1 to 18 (MASEELACKLERRLRREE). Residues 1–53 (MASEELACKLERRLRREEAEESGPQLAPLGAPAPEPKPEPEPPARAPTASADA) are disordered. EF-hand domains lie at 90-125 (RLIK…LGAP) and 126-161 (QTHL…AAAG). Ca(2+)-binding residues include D103, D107, E114, D139, D141, D143, K145, and E150. Residue S201 is modified to Phosphoserine.

The protein resides in the mitochondrion inner membrane. Functionally, acts as a calcium sensor for mitochondrial flash (mitoflash) activation, an event characterized by stochastic bursts of superoxide production. May play a role in neuronal differentiation. The sequence is that of EF-hand domain-containing protein D1 (EFHD1) from Homo sapiens (Human).